The chain runs to 235 residues: Putative homeobox-leucine zipper protein ATHB-51 (235 aa).

Residues 74–133 (EMIKKKRLTSGQLASLERSFQEEIKLDSDRKVKLSRELGLQPRQIAVWFQNRRARWKAKQ) constitute a DNA-binding region (homeobox). The segment at 134-162 (LEQLYDSLRQEYDVVSREKQMLHDEVKKL) is leucine-zipper.

This sequence belongs to the HD-ZIP homeobox family. Class I subfamily. As to expression, widely expressed.

It localises to the nucleus. Putative transcription factor. In Arabidopsis thaliana (Mouse-ear cress), this protein is Putative homeobox-leucine zipper protein ATHB-51 (ATHB-51).